The chain runs to 175 residues: Threonylcarbamoyl-AMP synthase (175 aa).

In terms of domain architecture, YrdC-like spans 1–175 (MLHNDDVIAY…IINGKLIRYV (175 aa)).

The protein belongs to the SUA5 family. TsaC subfamily.

Its subcellular location is the cytoplasm. The enzyme catalyses L-threonine + hydrogencarbonate + ATP = L-threonylcarbamoyladenylate + diphosphate + H2O. Required for the formation of a threonylcarbamoyl group on adenosine at position 37 (t(6)A37) in tRNAs that read codons beginning with adenine. Catalyzes the conversion of L-threonine, HCO(3)(-)/CO(2) and ATP to give threonylcarbamoyl-AMP (TC-AMP) as the acyladenylate intermediate, with the release of diphosphate. In Buchnera aphidicola subsp. Acyrthosiphon pisum (strain APS) (Acyrthosiphon pisum symbiotic bacterium), this protein is Threonylcarbamoyl-AMP synthase.